The chain runs to 492 residues: UDP-N-acetylmuramate--L-alanine ligase (492 aa).

126 to 132 serves as a coordination point for ATP; it reads GTHGKTT.

Belongs to the MurCDEF family.

It is found in the cytoplasm. It carries out the reaction UDP-N-acetyl-alpha-D-muramate + L-alanine + ATP = UDP-N-acetyl-alpha-D-muramoyl-L-alanine + ADP + phosphate + H(+). It functions in the pathway cell wall biogenesis; peptidoglycan biosynthesis. Cell wall formation. The chain is UDP-N-acetylmuramate--L-alanine ligase from Serratia proteamaculans (strain 568).